We begin with the raw amino-acid sequence, 901 residues long: Protein translocase subunit SecA (901 aa).

Residues Gln87, 105–109, and Asp512 each bind ATP; that span reads GEGKT. Zn(2+)-binding residues include Cys885, Cys887, Cys896, and His897.

This sequence belongs to the SecA family. As to quaternary structure, monomer and homodimer. Part of the essential Sec protein translocation apparatus which comprises SecA, SecYEG and auxiliary proteins SecDF-YajC and YidC. The cofactor is Zn(2+).

It is found in the cell inner membrane. Its subcellular location is the cytoplasm. It carries out the reaction ATP + H2O + cellular proteinSide 1 = ADP + phosphate + cellular proteinSide 2.. Part of the Sec protein translocase complex. Interacts with the SecYEG preprotein conducting channel. Has a central role in coupling the hydrolysis of ATP to the transfer of proteins into and across the cell membrane, serving both as a receptor for the preprotein-SecB complex and as an ATP-driven molecular motor driving the stepwise translocation of polypeptide chains across the membrane. This chain is Protein translocase subunit SecA, found in Salmonella paratyphi B (strain ATCC BAA-1250 / SPB7).